We begin with the raw amino-acid sequence, 247 residues long: Sugar fermentation stimulation protein homolog (247 aa).

The protein belongs to the SfsA family.

This chain is Sugar fermentation stimulation protein homolog, found in Aeromonas hydrophila subsp. hydrophila (strain ATCC 7966 / DSM 30187 / BCRC 13018 / CCUG 14551 / JCM 1027 / KCTC 2358 / NCIMB 9240 / NCTC 8049).